The primary structure comprises 53 residues: Rubredoxin (53 aa).

A Rubredoxin-like domain is found at 1–52; that stretch reads MAKWRCKICGYIYDEDEGDPDNGISPGTKFEDLPDDWVCPLCGAPKSEFERI. C6, C9, C39, and C42 together coordinate Fe cation.

Belongs to the rubredoxin family. It depends on Fe(3+) as a cofactor.

Rubredoxin is a small nonheme, iron protein lacking acid-labile sulfide. Its single Fe, chelated to 4 Cys, functions as an electron acceptor and may also stabilize the conformation of the molecule. In Pyrococcus abyssi (strain GE5 / Orsay), this protein is Rubredoxin (rub).